The following is a 337-amino-acid chain: Tryptophan--tRNA ligase 2 (337 aa).

ATP contacts are provided by residues 13-15 (QPT) and 22-23 (GN). A 'HIGH' region motif is present at residues 14-23 (PTAGSFHLGN). Position 139 (Asp-139) interacts with L-tryptophan. ATP is bound by residues 151–153 (GED), Ile-190, and 199–203 (KMSKS). Positions 199-203 (KMSKS) match the 'KMSKS' region motif.

The protein belongs to the class-I aminoacyl-tRNA synthetase family. Homodimer.

Its subcellular location is the cytoplasm. The catalysed reaction is tRNA(Trp) + L-tryptophan + ATP = L-tryptophyl-tRNA(Trp) + AMP + diphosphate + H(+). Functionally, catalyzes the attachment of tryptophan to tRNA(Trp). The sequence is that of Tryptophan--tRNA ligase 2 from Streptomyces avermitilis (strain ATCC 31267 / DSM 46492 / JCM 5070 / NBRC 14893 / NCIMB 12804 / NRRL 8165 / MA-4680).